A 231-amino-acid polypeptide reads, in one-letter code: Ribonuclease HII (231 aa).

The 192-residue stretch at 32–223 (WPVAGMDEAG…FRLGGTEVVE (192 aa)) folds into the RNase H type-2 domain. 3 residues coordinate a divalent metal cation: Asp-38, Glu-39, and Asp-130.

It belongs to the RNase HII family. Requires Mn(2+) as cofactor. It depends on Mg(2+) as a cofactor.

It is found in the cytoplasm. It carries out the reaction Endonucleolytic cleavage to 5'-phosphomonoester.. Endonuclease that specifically degrades the RNA of RNA-DNA hybrids. The polypeptide is Ribonuclease HII (Mesorhizobium japonicum (strain LMG 29417 / CECT 9101 / MAFF 303099) (Mesorhizobium loti (strain MAFF 303099))).